We begin with the raw amino-acid sequence, 492 residues long: Uridine-cytidine kinase D (492 aa).

The disordered stretch occupies residues 36–56 (PLPKNKKDHDQSIESDSSFTR). 117 to 124 (GPVGAGKT) is an ATP binding site. A CYTH domain is found at 290 to 460 (EPVYVCKAKY…PQTFLYLYFK (171 aa)). The segment covering 468–483 (PNYSKLKPNNTNSKIL) has biased composition (low complexity). The tract at residues 468 to 492 (PNYSKLKPNNTNSKILKNNKDKKNL) is disordered.

Belongs to the uridine kinase family.

It catalyses the reaction uridine + ATP = UMP + ADP + H(+). The enzyme catalyses cytidine + ATP = CMP + ADP + H(+). Its pathway is pyrimidine metabolism; CTP biosynthesis via salvage pathway; CTP from cytidine: step 1/3. The protein operates within pyrimidine metabolism; UMP biosynthesis via salvage pathway; UMP from uridine: step 1/1. Its function is as follows. Catalyzes the conversion of uridine into uridine monophosphate and cytidine into cytidine monophosphate in the pyrimidine salvage pathway. This chain is Uridine-cytidine kinase D (udkD), found in Dictyostelium discoideum (Social amoeba).